A 430-amino-acid polypeptide reads, in one-letter code: Small ribosomal subunit protein uS5m (430 aa).

One can recognise an S5 DRBM domain in the interval Phe218–Ile282.

The protein belongs to the universal ribosomal protein uS5 family. In terms of assembly, component of the mitochondrial small ribosomal subunit (mt-SSU). Mature mammalian 55S mitochondrial ribosomes consist of a small (28S) and a large (39S) subunit. The 28S small subunit contains a 12S ribosomal RNA (12S mt-rRNA) and 30 different proteins. The 39S large subunit contains a 16S rRNA (16S mt-rRNA), a copy of mitochondrial valine transfer RNA (mt-tRNA(Val)), which plays an integral structural role, and 52 different proteins.

It is found in the mitochondrion. The sequence is that of Small ribosomal subunit protein uS5m (MRPS5) from Homo sapiens (Human).